Here is a 393-residue protein sequence, read N- to C-terminus: Branched-chain amino acid aminotransferase 1, mitochondrial (393 aa).

Residues 1-34 (MIHRGLWLHNLVQSYRVGSSSSSSTLFKLVYRYN) constitute a mitochondrion transit peptide. Residue Arg138 participates in pyridoxal 5'-phosphate binding. The active-site Proton acceptor is Lys240. At Lys240 the chain carries N6-(pyridoxal phosphate)lysine. A pyridoxal 5'-phosphate-binding site is contributed by Glu276.

This sequence belongs to the class-IV pyridoxal-phosphate-dependent aminotransferase family. Pyridoxal 5'-phosphate is required as a cofactor. In terms of tissue distribution, expressed specifically in lupulin glands.

It is found in the mitochondrion. The enzyme catalyses L-isoleucine + 2-oxoglutarate = (S)-3-methyl-2-oxopentanoate + L-glutamate. It carries out the reaction L-leucine + 2-oxoglutarate = 4-methyl-2-oxopentanoate + L-glutamate. The catalysed reaction is L-valine + 2-oxoglutarate = 3-methyl-2-oxobutanoate + L-glutamate. Its pathway is amino-acid biosynthesis; L-isoleucine biosynthesis; L-isoleucine from 2-oxobutanoate: step 4/4. It participates in amino-acid biosynthesis; L-leucine biosynthesis; L-leucine from 3-methyl-2-oxobutanoate: step 4/4. It functions in the pathway amino-acid biosynthesis; L-valine biosynthesis; L-valine from pyruvate: step 4/4. Converts 2-oxo acids to branched-chain amino acids (BCAA). Shows no kinetic preferences corresponding to anabolic or catabolic functions, but likely involved in BCAA catabolism. The sequence is that of Branched-chain amino acid aminotransferase 1, mitochondrial from Humulus lupulus (European hop).